Consider the following 409-residue polypeptide: S-adenosylmethionine synthase (409 aa).

An ATP-binding site is contributed by H15. D17 contributes to the Mg(2+) binding site. E43 provides a ligand contact to K(+). Positions 56 and 100 each coordinate L-methionine. The segment at 100-110 (QSSDIAQGVNE) is flexible loop. ATP is bound by residues 171 to 173 (DGK), 248 to 249 (KF), D257, 263 to 264 (RK), A280, and K284. D257 is a binding site for L-methionine. Residue K288 coordinates L-methionine.

Belongs to the AdoMet synthase family. As to quaternary structure, homotetramer; dimer of dimers. The cofactor is Mg(2+). K(+) is required as a cofactor.

It localises to the cytoplasm. The catalysed reaction is L-methionine + ATP + H2O = S-adenosyl-L-methionine + phosphate + diphosphate. The protein operates within amino-acid biosynthesis; S-adenosyl-L-methionine biosynthesis; S-adenosyl-L-methionine from L-methionine: step 1/1. Catalyzes the formation of S-adenosylmethionine (AdoMet) from methionine and ATP. The overall synthetic reaction is composed of two sequential steps, AdoMet formation and the subsequent tripolyphosphate hydrolysis which occurs prior to release of AdoMet from the enzyme. The sequence is that of S-adenosylmethionine synthase from Prochlorococcus marinus (strain NATL2A).